A 183-amino-acid chain; its full sequence is Putative lipoprotein LpqE (183 aa).

The N-terminal stretch at 1–30 (MSRFKISLPALATRVAVLGFLTLMASVLGG) is a signal peptide. The N-palmitoyl cysteine moiety is linked to residue Cys31. Cys31 carries the S-diacylglycerol cysteine lipid modification.

Its subcellular location is the cell membrane. This Mycobacterium leprae (strain TN) protein is Putative lipoprotein LpqE (lpqE).